We begin with the raw amino-acid sequence, 396 residues long: Ribose-phosphate pyrophosphokinase 1, chloroplastic (396 aa).

The transit peptide at 1-36 (MPLSYSAAAAAAPSPLAARSRGLLRRPPRSSPVVVR) directs the protein to the chloroplast. 4 residues coordinate Mg(2+): aspartate 204, histidine 206, aspartate 215, and aspartate 219. Residues 290–305 (GKVAVMMDDMIDTAGT) are binding of phosphoribosylpyrophosphate.

Belongs to the ribose-phosphate pyrophosphokinase family. The cofactor is Mg(2+).

The protein resides in the plastid. The protein localises to the chloroplast. The enzyme catalyses D-ribose 5-phosphate + ATP = 5-phospho-alpha-D-ribose 1-diphosphate + AMP + H(+). This is Ribose-phosphate pyrophosphokinase 1, chloroplastic from Oryza sativa subsp. japonica (Rice).